A 494-amino-acid chain; its full sequence is Paired box protein Pax-2-B (494 aa).

The paired DNA-binding region spans 15–141 (RHGGVNQLGG…SSINRIIRTK (127 aa)). Residues 18–74 (GVNQLGGVFVNGRPLPDVVRQRIVELAHQGVRPCDISRQLRVSHGCVSKILGRYYET) are PAI subdomain. The interval 93 to 141 (KVVDKIADYKRQNPTMFAWEIRDRLLAEGICDNDTVPSVSSINRIIRTK) is RED subdomain. A disordered region spans residues 142–221 (VQQPFHPTPD…GDSQSSVESL (80 aa)). The span at 163-175 (VPSTASPPVSSAS) shows a compositional bias: low complexity.

In terms of tissue distribution, expression becomes spatially localized at mid-gastrula stages and is localized to the nervous system (midbrain, hindbrain, spinal cord), sensory organs (optic vesicle and stalk, otic vesicle), visceral arches, developing excretory system (pronephros, pronephric duct, rectal diverticulum, proctodaeum) and thryoid gland. Splicing does not appear to be tissue-specific.

It localises to the nucleus. Functionally, probable transcription factor. Involved in kidney development, acting synergistically with lhx1/lim-1 in pronephric morphogenesis during the tailbud stages. The sequence is that of Paired box protein Pax-2-B (pax2-b) from Xenopus laevis (African clawed frog).